The sequence spans 452 residues: Maltoporin (452 aa).

Positions 1–25 (MMITLRKLPLAVAVAAGVMSAQAMA) are cleaved as a signal peptide.

It belongs to the porin LamB (TC 1.B.3) family. Homotrimer formed of three 18-stranded antiparallel beta-barrels, containing three independent channels.

It localises to the cell outer membrane. It catalyses the reaction beta-maltose(in) = beta-maltose(out). Its function is as follows. Involved in the transport of maltose and maltodextrins. The chain is Maltoporin from Salmonella enteritidis PT4 (strain P125109).